Consider the following 567-residue polypeptide: Probable diguanylate cyclase DgcQ (567 aa).

2 helical membrane-spanning segments follow: residues Phe20–Leu40 and Ile357–Ile377. Residues Gln425–Ala560 form the GGDEF domain. Asp433 serves as a coordination point for Mg(2+). Substrate contacts are provided by Asn441, His446, and Asp450. Residue Glu476 coordinates Mg(2+). The active-site Proton acceptor is the Glu476.

In terms of assembly, homodimer. Requires Mg(2+) as cofactor.

The protein localises to the cell inner membrane. It carries out the reaction 2 GTP = 3',3'-c-di-GMP + 2 diphosphate. It functions in the pathway glycan metabolism; bacterial cellulose biosynthesis. Its pathway is purine metabolism; 3',5'-cyclic di-GMP biosynthesis. Functionally, catalyzes the synthesis of cyclic-di-GMP (c-di-GMP) via the condensation of 2 GTP molecules. Cyclic-di-GMP is a second messenger which controls cell surface-associated traits in bacteria. Involved in the regulation of cellulose production. The sequence is that of Probable diguanylate cyclase DgcQ from Salmonella typhi.